The following is a 307-amino-acid chain: Alpha N-terminal protein methyltransferase 1 (307 aa).

Residues 38-54 are compositionally biased toward low complexity; the sequence is EPAPAPAAGSNGVAGEQ. The interval 38–60 is disordered; sequence EPAPAPAAGSNGVAGEQEAGGGG. S-adenosyl-L-methionine contacts are provided by residues Gly123, Arg128, 145-147, 179-180, and Gln195; these read EPV and LQ.

This sequence belongs to the methyltransferase superfamily. NTM1 family.

It carries out the reaction N-terminal L-alanyl-L-prolyl-L-lysyl-[protein] + 3 S-adenosyl-L-methionine = N-terminal N,N,N-trimethyl-L-alanyl-L-prolyl-L-lysyl-[protein] + 3 S-adenosyl-L-homocysteine + 3 H(+). The enzyme catalyses N-terminal L-seryl-L-prolyl-L-lysyl-[protein] + 3 S-adenosyl-L-methionine = N-terminal N,N,N-trimethyl-L-seryl-L-prolyl-L-lysyl-[protein] + 3 S-adenosyl-L-homocysteine + 3 H(+). It catalyses the reaction N-terminal L-prolyl-L-prolyl-L-lysyl-[protein] + 2 S-adenosyl-L-methionine = N-terminal N,N-dimethyl-L-prolyl-L-prolyl-L-lysyl-[protein] + 2 S-adenosyl-L-homocysteine + 2 H(+). Its function is as follows. Alpha-N-methyltransferase that methylates the N-terminus of target proteins containing the N-terminal motif [Ala/Pro/Ser]-Pro-Lys when the initiator Met is cleaved. Specifically catalyzes mono-, di- or tri-methylation of exposed alpha-amino group of Ala or Ser residue in the [Ala/Ser]-Pro-Lys motif and mono- or di-methylation of Pro in the Pro-Pro-Lys motif. In Oryza sativa subsp. indica (Rice), this protein is Alpha N-terminal protein methyltransferase 1.